The primary structure comprises 125 residues: Acyl carrier protein, mitochondrial (125 aa).

The transit peptide at 1–36 (MFRSVCRISSRVAPSAYRTIMGRSVMSNTILAQRFY) directs the protein to the mitochondrion. The Carrier domain maps to 43–122 (DQVSQRVIDV…ETVDYIASNP (80 aa)). S82 carries the post-translational modification O-(pantetheine 4'-phosphoryl)serine.

It belongs to the acyl carrier protein (ACP) family. As to quaternary structure, complex I is composed of about 30 different subunits. In terms of processing, 4'-phosphopantetheine is transferred from CoA to a specific serine of apo-ACP by acpS. This modification is essential for activity because fatty acids are bound in thioester linkage to the sulfhydryl of the prosthetic group.

It is found in the mitochondrion. The protein operates within lipid metabolism; fatty acid biosynthesis. In terms of biological role, carrier of the growing fatty acid chain in fatty acid biosynthesis. May be involved in the synthesis of very-long-chain fatty acids. Accessory and non-catalytic subunit of the mitochondrial membrane respiratory chain NADH dehydrogenase (Complex I), which functions in the transfer of electrons from NADH to the respiratory chain. In Saccharomyces cerevisiae (strain ATCC 204508 / S288c) (Baker's yeast), this protein is Acyl carrier protein, mitochondrial (ACP1).